The following is a 1260-amino-acid chain: Myosin-1 (1260 aa).

Positions valine 34–aspartate 713 constitute a Myosin motor domain. Glycine 127–threonine 134 is an ATP binding site. Serine 355 carries the phosphoserine modification. Residues serine 402–serine 484 form an actin-binding region. IQ domains follow at residues tyrosine 717–serine 737 and alanine 738–arginine 763. The 191-residue stretch at lysine 769–alanine 959 folds into the TH1 domain. 2 stretches are compositionally biased toward polar residues: residues serine 948–glutamine 963 and threonine 972–tyrosine 988. Positions serine 948–proline 1106 are disordered. Over residues glycine 989–histidine 1013 the composition is skewed to low complexity. Over residues glutamine 1030 to arginine 1064 the composition is skewed to polar residues. Residues glutamine 1065–alanine 1082 are compositionally biased toward low complexity. Residues alanine 1092 to threonine 1101 show a composition bias toward pro residues. An SH3 domain is found at glutamine 1103–glutamate 1165.

Belongs to the TRAFAC class myosin-kinesin ATPase superfamily. Myosin family. Phosphorylation of the TEDS site (Ser-355) is required for the polarization of the actin cytoskeleton. Phosphorylation probably activates the myosin-I ATPase activity.

It is found in the cytoplasm. The protein resides in the cytoskeleton. Its subcellular location is the actin patch. Functionally, type-I myosin implicated in the organization of the actin cytoskeleton. Required for proper actin cytoskeleton polarization. At the cell cortex, assembles in patch-like structures together with proteins from the actin-polymerizing machinery and promotes actin assembly. Functions as actin nucleation-promoting factor (NPF) for the Arp2/3 complex. The chain is Myosin-1 (MYO1) from Kluyveromyces lactis (strain ATCC 8585 / CBS 2359 / DSM 70799 / NBRC 1267 / NRRL Y-1140 / WM37) (Yeast).